The following is a 580-amino-acid chain: Arginine--tRNA ligase (580 aa).

The 'HIGH' region signature appears at 131–141 (ANPTGPMHVGH).

The protein belongs to the class-I aminoacyl-tRNA synthetase family. In terms of assembly, monomer.

It localises to the cytoplasm. The enzyme catalyses tRNA(Arg) + L-arginine + ATP = L-arginyl-tRNA(Arg) + AMP + diphosphate. The protein is Arginine--tRNA ligase of Cereibacter sphaeroides (strain ATCC 17025 / ATH 2.4.3) (Rhodobacter sphaeroides).